The primary structure comprises 381 residues: Choline transport ATP-binding protein OpuBA (381 aa).

One can recognise an ABC transporter domain in the interval 2–236; sequence LTLENVSKTY…PADEFVEEFI (235 aa). Residue 35–42 participates in ATP binding; the sequence is GPSGCGKT. 2 CBS domains span residues 256-314 and 316-374; these read MNTQ…LVSE and LHED…WGEE.

This sequence belongs to the ABC transporter superfamily.

In terms of biological role, involved in a high affinity multicomponent binding-protein-dependent transport system for choline. Probably responsible for energy coupling to the transport system. This is Choline transport ATP-binding protein OpuBA (opuBA) from Bacillus subtilis (strain 168).